The following is a 424-amino-acid chain: Tol-Pal system protein TolB (424 aa).

The first 24 residues, 1–24 (MNKARAIARWISFLLLIAAGQVCA), serve as a signal peptide directing secretion.

Belongs to the TolB family. In terms of assembly, the Tol-Pal system is composed of five core proteins: the inner membrane proteins TolA, TolQ and TolR, the periplasmic protein TolB and the outer membrane protein Pal. They form a network linking the inner and outer membranes and the peptidoglycan layer.

The protein localises to the periplasm. In terms of biological role, part of the Tol-Pal system, which plays a role in outer membrane invagination during cell division and is important for maintaining outer membrane integrity. This chain is Tol-Pal system protein TolB, found in Methylococcus capsulatus (strain ATCC 33009 / NCIMB 11132 / Bath).